We begin with the raw amino-acid sequence, 213 residues long: Probable nicotinate-nucleotide adenylyltransferase (213 aa).

The protein belongs to the NadD family.

The enzyme catalyses nicotinate beta-D-ribonucleotide + ATP + H(+) = deamido-NAD(+) + diphosphate. Its pathway is cofactor biosynthesis; NAD(+) biosynthesis; deamido-NAD(+) from nicotinate D-ribonucleotide: step 1/1. Catalyzes the reversible adenylation of nicotinate mononucleotide (NaMN) to nicotinic acid adenine dinucleotide (NaAD). The sequence is that of Probable nicotinate-nucleotide adenylyltransferase from Ruegeria pomeroyi (strain ATCC 700808 / DSM 15171 / DSS-3) (Silicibacter pomeroyi).